The primary structure comprises 376 residues: Integrator complex assembly factor WDR73 (376 aa).

WD repeat units lie at residues 84–123 (FSEE…SDVI), 276–316 (ASKN…TESS), and 337–376 (TSPA…ITDR). Residues 316–336 (SSPQPIFSHRGHEMSQEAKSS) form a disordered region.

Belongs to the WD repeat WDR73 family.

The protein localises to the cytoplasm. It localises to the cytoskeleton. The protein resides in the spindle. It is found in the spindle pole. Its subcellular location is the cleavage furrow. Component of a multiprotein complex required for the assembly of the RNA endonuclease module of the integrator complex. Associates with ints9 and ints11 in the cytoplasm, stabilizing the ints9-ints11 heterodimer and blocking the active site of ints11. Brat1 then joins the complex and plugs the active site of ints11, leading to wdr73 release and nuclear import of ints9 and ints11. This Danio rerio (Zebrafish) protein is Integrator complex assembly factor WDR73 (wdr73).